The chain runs to 260 residues: Adenosylcobinamide-GDP ribazoletransferase (260 aa).

Transmembrane regions (helical) follow at residues 40–60, 64–84, 117–137, 142–162, 189–209, and 210–230; these read AFPFAGLLIGFVPAFALLLLL, ADPLVAALVALAVQALVTGAL, YGAIALILSFAIRAAALAAIV, PLAAVLAIPAVAALSRGAITW, FALVAAGLLAALLIWPAFGLW, and PLVASLLAAGAAGFVCTVFIR.

The protein belongs to the CobS family. Mg(2+) is required as a cofactor.

The protein resides in the cell inner membrane. It carries out the reaction alpha-ribazole + adenosylcob(III)inamide-GDP = adenosylcob(III)alamin + GMP + H(+). It catalyses the reaction alpha-ribazole 5'-phosphate + adenosylcob(III)inamide-GDP = adenosylcob(III)alamin 5'-phosphate + GMP + H(+). It functions in the pathway cofactor biosynthesis; adenosylcobalamin biosynthesis; adenosylcobalamin from cob(II)yrinate a,c-diamide: step 7/7. Functionally, joins adenosylcobinamide-GDP and alpha-ribazole to generate adenosylcobalamin (Ado-cobalamin). Also synthesizes adenosylcobalamin 5'-phosphate from adenosylcobinamide-GDP and alpha-ribazole 5'-phosphate. The polypeptide is Adenosylcobinamide-GDP ribazoletransferase (Rhizobium etli (strain CIAT 652)).